The chain runs to 142 residues: Large ribosomal subunit protein uL13 (142 aa).

This sequence belongs to the universal ribosomal protein uL13 family. In terms of assembly, part of the 50S ribosomal subunit.

Functionally, this protein is one of the early assembly proteins of the 50S ribosomal subunit, although it is not seen to bind rRNA by itself. It is important during the early stages of 50S assembly. The sequence is that of Large ribosomal subunit protein uL13 from Ectopseudomonas mendocina (strain ymp) (Pseudomonas mendocina).